A 344-amino-acid chain; its full sequence is Arginine N-succinyltransferase (344 aa).

Position 125 (Leu-125) interacts with succinyl-CoA. His-229 acts as the Proton donor in catalysis.

This sequence belongs to the arginine N-succinyltransferase family.

The catalysed reaction is succinyl-CoA + L-arginine = N(2)-succinyl-L-arginine + CoA + H(+). It functions in the pathway amino-acid degradation; L-arginine degradation via AST pathway; L-glutamate and succinate from L-arginine: step 1/5. Its function is as follows. Catalyzes the transfer of succinyl-CoA to arginine to produce N(2)-succinylarginine. The protein is Arginine N-succinyltransferase of Citrobacter koseri (strain ATCC BAA-895 / CDC 4225-83 / SGSC4696).